The chain runs to 506 residues: RNA-splicing ligase RtcB homolog (506 aa).

5 residues coordinate Mn(2+): Asp120, Cys123, His228, His260, and His354. 227-231 (NHYAE) lines the GMP pocket. GMP contacts are provided by residues 354 to 355 (HN), 403 to 406 (GGTM), Ser410, 429 to 432 (HGAG), and Lys505. The active-site GMP-histidine intermediate is His429.

The protein belongs to the RtcB family. As to quaternary structure, catalytic component of the tRNA-splicing ligase complex. Requires Mn(2+) as cofactor.

It catalyses the reaction a 3'-end 3'-phospho-ribonucleotide-RNA + a 5'-end dephospho-ribonucleoside-RNA + GTP = a ribonucleotidyl-ribonucleotide-RNA + GMP + diphosphate. The catalysed reaction is a 3'-end 2',3'-cyclophospho-ribonucleotide-RNA + a 5'-end dephospho-ribonucleoside-RNA + GTP + H2O = a ribonucleotidyl-ribonucleotide-RNA + GMP + diphosphate + H(+). In terms of biological role, catalytic subunit of the tRNA-splicing ligase complex that acts by directly joining spliced tRNA halves to mature-sized tRNAs by incorporating the precursor-derived splice junction phosphate into the mature tRNA as a canonical 3',5'-phosphodiester. May act as an RNA ligase with broad substrate specificity, and may function toward other RNAs. The polypeptide is RNA-splicing ligase RtcB homolog (Plasmodium falciparum (isolate 3D7)).